Here is a 513-residue protein sequence, read N- to C-terminus: MQLNPSEISELIKSRIQGLEASADVRNQGTVISVTDGIVRIHGLSDVMQGEMLEFPGNTFGLALNLERDSVGAVILGEYEHISEGDIVKTTGRILEVPVGPELVGRVLDALGNPIDGKGPVNAKLTDAIEKIAPGVIWRKSVSQPVQTGLKSIDSMVPIGRGQRELIIGDRQCGKTAVAIDTIINQKGKDLICIYVAIGQKASSIMNVVRKLEETGALEYTIVVAASASESAAMQYLAPYAGCTMGEYFRDRGQDALIIYDDLTKQAWAYRQISLLLRRPPGREAYPGDVFYLHSRLLERAARVSEEYVEKFTNGEVKGKSGSLTALPVIETQAGDVTAFVPTNVISITDGQIFLETDLFNAGIRPAINAGVSVSRVGGAAQTKVVKKLSGGIRTDLAQYRELAAFAQFASDLDEATRKQLERGRRVTELLKQPQYQPLQVWELAVSLFSANNGYLDDLDVKDVLPFEKGLREYLKTSHADLIKRIEDTKDLSKDDESALHAALKDFKKSGAY.

169-176 (GDRQCGKT) contacts ATP.

This sequence belongs to the ATPase alpha/beta chains family. As to quaternary structure, F-type ATPases have 2 components, CF(1) - the catalytic core - and CF(0) - the membrane proton channel. CF(1) has five subunits: alpha(3), beta(3), gamma(1), delta(1), epsilon(1). CF(0) has three main subunits: a(1), b(2) and c(9-12). The alpha and beta chains form an alternating ring which encloses part of the gamma chain. CF(1) is attached to CF(0) by a central stalk formed by the gamma and epsilon chains, while a peripheral stalk is formed by the delta and b chains.

The protein resides in the cell inner membrane. It catalyses the reaction ATP + H2O + 4 H(+)(in) = ADP + phosphate + 5 H(+)(out). In terms of biological role, produces ATP from ADP in the presence of a proton gradient across the membrane. The alpha chain is a regulatory subunit. The chain is ATP synthase subunit alpha from Burkholderia mallei (strain NCTC 10229).